The primary structure comprises 368 residues: MNTLHPHKQQQEQAQQQEEARYEWDLSLSTVVSSSSSSASDVIGAIEFDPTDNIVATAGISRKIRFYGLPSLLRNNAVSGTGVSFVDQATACEYYICTPAKLSSLRWRPGSGGRVIGSGDYDGVVMEYDLEKRTPVFERDEHGGRRVWSVDYTRHGGASTVGASGSDDGTMQVWDPRCPPEESVGVVRPAGICRSAVCCVEFDPSGGPAVAVGCADRKGYVYDIRKLVDPALTLQGHTKTVSYVRFLDGGTVVTAGTDGCLKLWSVEDGRVIRTYEGHVNNRNFVGLSVWRNGALFGCGSENNRVFVYDRRWGKPVWVDGFEPVGMNSGSDKRFVSSVCWRQSGVDQCTLVAGGSDGVLQVYVGKRKP.

7 WD repeats span residues 38 to 77 (SASDVIGAIEFDPTDNIVATAGISRKIRFYGLPSLLRNNA), 97 to 138 (CTPA…PVFE), 141 to 184 (EHGG…EESV), 192 to 232 (ICRS…DPAL), 236 to 276 (GHTK…RTYE), 279 to 318 (VNNRNFVGLSVWRNGALFGCGSENNRVFVYDRRWGKPVWV), and 330 to 368 (SDKRFVSSVCWRQSGVDQCTLVAGGSDGVLQVYVGKRKP).

In terms of assembly, interacts with UVR8.

The protein localises to the nucleus. It is found in the cytoplasm. The protein resides in the cytosol. Functionally, functions in association with RUP1 as repressor of UV-B-induced photomorphogenesis mediated by UVR8 and HY5. Plays a crucial negative feedback regulatory role downstream of UVR8-COP1 to inhibit UVR8 function, balance UV-B-specific responses and ensure normal plant growth. Is involved in the regulation of photoperiodic flowering and vegetative development. May act as negative regulator of photoperiodic flowering by suppressing flowering through the action of CONSTANS (CO) and FLOWERING LOCUS T (FT). In Arabidopsis thaliana (Mouse-ear cress), this protein is WD repeat-containing protein RUP2 (RUP2).